The primary structure comprises 106 residues: uncharacterized protein (106 aa).

2 consecutive transmembrane segments (helical) span residues 10 to 30 (VYIQ…VAFV) and 65 to 85 (LDFA…LLAY).

It localises to the membrane. This is an uncharacterized protein from Saccharomyces cerevisiae (strain ATCC 204508 / S288c) (Baker's yeast).